We begin with the raw amino-acid sequence, 472 residues long: Estrogen receptor beta (472 aa).

The modulating stretch occupies residues 1 to 104 (MAFCSPAMMN…NPGSKRDAHF (104 aa)). NR C4-type zinc fingers lie at residues 105 to 125 (CAVCSDYASGYHYGVWSCEGC) and 141 to 165 (CPATNQCTIDKNRRKSCQACRLRKC). The nuclear receptor DNA-binding region spans 105–170 (CAVCSDYASG…RLRKCYEVGM (66 aa)). The NR LBD domain occupies 217–449 (SPEQFVLTLL…DLLLEMLNAH (233 aa)).

The protein belongs to the nuclear hormone receptor family. NR3 subfamily. As to quaternary structure, binds DNA as a homodimer. Can form a heterodimer with ER-alpha. As to expression, a high expression is seen in the telencephalon, diencephalon, pituitary, testis and kidneys but little or no expression is seen in the cerebellum, pectoral muscle and adrenal gland.

The protein localises to the nucleus. Binds estrogens with an affinity similar to that of ER-alpha, and activates expression of reporter genes containing estrogen response elements (ERE) in an estrogen-dependent manner. In Coturnix japonica (Japanese quail), this protein is Estrogen receptor beta (ESR2).